A 103-amino-acid polypeptide reads, in one-letter code: MKDSYISIVIAYLMVTFILVSSMPIEGEKRELGPHRLPCPPKLNDENYCFNGKCVHLVAQDEPGKPYYSCICDEFYIGERCGTLDLTNPGYFLKGQSSTQSSI.

The first 30 residues, 1–30 (MKDSYISIVIAYLMVTFILVSSMPIEGEKR), serve as a signal peptide directing secretion. Cystine bridges form between cysteine 39/cysteine 54, cysteine 49/cysteine 70, and cysteine 72/cysteine 81. Positions 43–82 (LNDENYCFNGKCVHLVAQDEPGKPYYSCICDEFYIGERCG) constitute an EGF-like domain.

This sequence belongs to the EGF domain peptide family. As to expression, expressed by the venom gland.

It localises to the secreted. Its function is as follows. Ant peptide with probable defensive activity which acts as a potent agonist of the mammalian epidermal growth factor receptor (EGFR). Mimics, both structurally and functionally, vertebrate epidermal growth factor (EGF) peptide hormones. In vivo, intraplantar injection in mice causes long-lasting (several days) hypersensitivity of the injected paw to both mechanical and thermal stimuli. Its long-lasting effect is unusual for venom toxins whose effects are usually immediate. One possible explanation is that it would reduce the duration of a nest attack, discourage future attacks, or enhance the actions of subsequent exposure to other pain-inducing venom peptides. The protein is OMEGA-ectatommitoxin(02)-Rm1d of Rhytidoponera metallica (Australian green-headed ant).